We begin with the raw amino-acid sequence, 1157 residues long: DNA-directed RNA polymerase subunit beta (1157 aa).

This sequence belongs to the RNA polymerase beta chain family. In terms of assembly, the RNAP catalytic core consists of 2 alpha, 1 beta, 1 beta' and 1 omega subunit. When a sigma factor is associated with the core the holoenzyme is formed, which can initiate transcription.

It carries out the reaction RNA(n) + a ribonucleoside 5'-triphosphate = RNA(n+1) + diphosphate. DNA-dependent RNA polymerase catalyzes the transcription of DNA into RNA using the four ribonucleoside triphosphates as substrates. The polypeptide is DNA-directed RNA polymerase subunit beta (Tropheryma whipplei (strain TW08/27) (Whipple's bacillus)).